The chain runs to 626 residues: UvrABC system protein C (626 aa).

The GIY-YIG domain maps to Q26 to V105. The 36-residue stretch at Q215–L250 folds into the UVR domain.

This sequence belongs to the UvrC family. In terms of assembly, interacts with UvrB in an incision complex.

It localises to the cytoplasm. The UvrABC repair system catalyzes the recognition and processing of DNA lesions. UvrC both incises the 5' and 3' sides of the lesion. The N-terminal half is responsible for the 3' incision and the C-terminal half is responsible for the 5' incision. The protein is UvrABC system protein C of Synechocystis sp. (strain ATCC 27184 / PCC 6803 / Kazusa).